Reading from the N-terminus, the 105-residue chain is Large ribosomal subunit protein uL24 (105 aa).

This sequence belongs to the universal ribosomal protein uL24 family. In terms of assembly, part of the 50S ribosomal subunit.

In terms of biological role, one of two assembly initiator proteins, it binds directly to the 5'-end of the 23S rRNA, where it nucleates assembly of the 50S subunit. Functionally, one of the proteins that surrounds the polypeptide exit tunnel on the outside of the subunit. The polypeptide is Large ribosomal subunit protein uL24 (Xanthomonas oryzae pv. oryzae (strain PXO99A)).